Here is a 271-residue protein sequence, read N- to C-terminus: Solute carrier family 66 member 2 (271 aa).

Helical transmembrane passes span 7–27 (GWLL…AMVF), 49–69 (FSTH…LFWF), and 72–92 (HFES…LLML). Positions 14–80 (HQLVSWVAAG…RHFESPLLWQ (67 aa)) constitute a PQ-loop 1 domain. Serine 110 is modified (phosphoserine). 3 helical membrane passes run 145–165 (DYVQ…YLSI), 168–188 (ALFV…LGVP), and 232–252 (VCGL…YAFA). Residues 178 to 233 (AVLTEAMLGVPQLYRNYCHRSTEGMSLKMVLMWTSGDTFKTAYFLLNGAPLQFSVC) enclose the PQ-loop 2 domain.

It localises to the membrane. In Mus musculus (Mouse), this protein is Solute carrier family 66 member 2 (Slc66a2).